The sequence spans 126 residues: Glycine cleavage system H protein (126 aa).

Residues 22–103 (KAYIGITDYA…PYGSWMALVE (82 aa)) enclose the Lipoyl-binding domain. N6-lipoyllysine is present on lysine 63.

This sequence belongs to the GcvH family. As to quaternary structure, the glycine cleavage system is composed of four proteins: P, T, L and H. (R)-lipoate is required as a cofactor.

In terms of biological role, the glycine cleavage system catalyzes the degradation of glycine. The H protein shuttles the methylamine group of glycine from the P protein to the T protein. This Thermoanaerobacter pseudethanolicus (strain ATCC 33223 / 39E) (Clostridium thermohydrosulfuricum) protein is Glycine cleavage system H protein.